Consider the following 89-residue polypeptide: Elongation factor 1-beta (89 aa).

Belongs to the EF-1-beta/EF-1-delta family.

In terms of biological role, promotes the exchange of GDP for GTP in EF-1-alpha/GDP, thus allowing the regeneration of EF-1-alpha/GTP that could then be used to form the ternary complex EF-1-alpha/GTP/AAtRNA. In Methanobrevibacter smithii (strain ATCC 35061 / DSM 861 / OCM 144 / PS), this protein is Elongation factor 1-beta.